The sequence spans 470 residues: mRNA export factor ICP27 homolog (470 aa).

Disordered regions lie at residues 1–31 (MALS…TGGD) and 73–202 (FSAS…AGDR). Residues 73–85 (FSASPQRAQPSNP) show a composition bias toward polar residues. Composition is skewed to basic residues over residues 94 to 107 (HGRR…RRNN) and 178 to 187 (RVHRNRRRGN). The Zn(2+) site is built by Cys359, His437, Cys441, and Cys446. The CHC2-type zinc finger occupies 359–446 (CYLSSSGSPT…HKRRCKADTC (88 aa)).

It belongs to the HHV-1 ICP27 protein family. Homodimer. Homodimerization is required for transactivation. Associates in a complex with RNA, and host export factors NXF1/TAP and ALYREF; these interactions allow nuclear export of viral transcripts. Interacts with three host shuttling SR proteins SRSF1, SRSF3 and SRSF7. Interacts with host SRPK1. Interacts with IE62; this interaction enhances IE62 transactivation.

Its subcellular location is the host cytoplasm. The protein localises to the host nucleus. Multifunctional regulator of the expression of viral genes that mediates nuclear export of viral intronless mRNAs. This immediate early (EI) protein promotes the nuclear export of viral intronless mRNAs by interacting with mRNAs and host NXF1/TAP. The chain is mRNA export factor ICP27 homolog from Equine herpesvirus 1 (strain Kentucky A) (EHV-1).